A 1457-amino-acid polypeptide reads, in one-letter code: ABC transporter G family member 36 (1457 aa).

Residues 14 to 43 (RLGGSMRGDSGSMWRRGDDVFSRSSREEDD) are disordered. Basic and acidic residues predominate over residues 28 to 39 (RRGDDVFSRSSR). The 274-residue stretch at 164 to 437 (GNALGILPNR…FESTGFKCPD (274 aa)) folds into the ABC transporter 1 domain. 197–204 (GPPGSGKT) contributes to the ATP binding site. The region spanning 515–728 (ELLKANIDRE…AQNAISVNEL (214 aa)) is the ABC transmembrane type-2 1 domain. Helical transmembrane passes span 533 to 553 (FVYM…MTLF), 565 to 585 (SGGI…FNGF), 621 to 641 (IPIT…VIGF), 653 to 673 (LLML…GGAA), 677 to 697 (IVAN…GGFI), 706 to 726 (WWIW…ISVN), and 765 to 785 (IGFG…TLAL). Positions 821–841 (SSGSTRRPMGNGTENDSTIVD) are disordered. Residues 860–1112 (LSFDNVRYSV…ELIKYFESIP (253 aa)) form the ABC transporter 2 domain. 905 to 912 (GVSGAGKT) lines the ATP pocket. In terms of domain architecture, ABC transmembrane type-2 2 spans 1185 to 1399 (TQCMACLWKQ…TLYGLVVSQF (215 aa)). The next 7 helical transmembrane spans lie at 1209–1229 (FFFT…LGGK), 1244–1264 (YAAV…VVAV), 1292–1312 (IPYT…MIGF), 1319–1339 (FFWY…YGMM), 1349–1369 (IASI…GFVI), 1380–1400 (WYCW…SQFG), and 1429–1449 (WVAT…GFAI).

It belongs to the ABC transporter superfamily. ABCG family. PDR (TC 3.A.1.205) subfamily.

The protein resides in the membrane. Functionally, may be a general defense protein. The polypeptide is ABC transporter G family member 36 (Oryza sativa subsp. indica (Rice)).